Consider the following 515-residue polypeptide: Ecdysteroid UDP-glucosyltransferase (515 aa).

A signal peptide spans 1–31; sequence MKMIILVVSLHVLRNSAAVRVLCMFPTPSYS.

It belongs to the UDP-glycosyltransferase family.

Catalyzes the transfer of glucose from UDP-glucose to ecdysteroids which are insect molting hormones. Expression of egt interferes with normal insect development and block molting. The chain is Ecdysteroid UDP-glucosyltransferase (EGT) from Spodoptera littoralis nuclear polyhedrosis virus (SlNPV).